A 308-amino-acid chain; its full sequence is 2-methylisocitrate lyase (308 aa).

51-53 (SGA) is a binding site for substrate. Residues aspartate 90 and aspartate 92 each coordinate Mg(2+). Substrate-binding positions include 127–128 (CG), arginine 160, glutamate 190, 212–214 (NMT), arginine 243, and arginine 272.

The protein belongs to the isocitrate lyase/PEP mutase superfamily. Methylisocitrate lyase family. As to quaternary structure, homotetramer; dimer of dimers. Mg(2+) serves as cofactor.

The enzyme catalyses (2S,3R)-3-hydroxybutane-1,2,3-tricarboxylate = pyruvate + succinate. It functions in the pathway organic acid metabolism; propanoate degradation. Its function is as follows. Involved in the catabolism of short chain fatty acids (SCFA) via the 2-methylcitrate cycle I (propionate degradation route). Catalyzes the thermodynamically favored C-C bond cleavage of (2R,3S)-2-methylisocitrate to yield pyruvate and succinate via an alpha-carboxy-carbanion intermediate. The protein is 2-methylisocitrate lyase of Aeropyrum pernix (strain ATCC 700893 / DSM 11879 / JCM 9820 / NBRC 100138 / K1).